Reading from the N-terminus, the 275-residue chain is Large ribosomal subunit protein uL2c (275 aa).

Disordered stretches follow at residues 32-53 and 218-242; these read SLSK…TCRH and PTVR…APIG.

Belongs to the universal ribosomal protein uL2 family. Part of the 50S ribosomal subunit.

It localises to the plastid. The protein localises to the chloroplast. This chain is Large ribosomal subunit protein uL2c (rpl2), found in Tetradesmus obliquus (Green alga).